The primary structure comprises 589 residues: MGICLMKRCCSWFLLISFLSALTNENEAISPDGEALLSFRNGVLASDGVIGLWRPEDPDPCNWKGVTCDAKTKRVIALSLTYHKLRGPLPPELGKLDQLRLLMLHNNALYQSIPASLGNCTALEGIYLQNNYITGTIPSEIGNLSGLKNLDLSNNNLNGAIPASLGQLKRLTKFNVSNNFLVGKIPSDGLLARLSRDSFNGNRNLCGKQIDIVCNDSGNSTASGSPTGQGGNNPKRLLISASATVGGLLLVALMCFWGCFLYKKLGRVESKSLVIDVGGGASIVMFHGDLPYASKDIIKKLESLNEEHIIGCGGFGTVYKLSMDDGNVFALKRIVKLNEGFDRFFERELEILGSIKHRYLVNLRGYCNSPTSKLLLYDYLPGGSLDEALHKRGEQLDWDSRVNIIIGAAKGLAYLHHDCSPRIIHRDIKSSNILLDGNLEARVSDFGLAKLLEDEESHITTIVAGTFGYLAPEYMQSGRATEKTDVYSFGVLVLEVLSGKLPTDASFIEKGFNIVGWLNFLISENRAKEIVDLSCEGVERESLDALLSIATKCVSSSPDERPTMHRVVQLLESEVMTPCPSDFYDSSSD.

The N-terminal stretch at 1–28 (MGICLMKRCCSWFLLISFLSALTNENEA) is a signal peptide. Topologically, residues 29-236 (ISPDGEALLS…TGQGGNNPKR (208 aa)) are extracellular. LRR repeat units lie at residues 72–96 (TKRVIALSLTYHKLRGPLPPELGKL), 97–120 (DQLRLLMLHNNALYQSIPASLGNC), 122–144 (ALEGIYLQNNYITGTIPSEIGNL), 145–168 (SGLKNLDLSNNNLNGAIPASLGQL), and 170–193 (RLTKFNVSNNFLVGKIPSDGLLAR). N-linked (GlcNAc...) asparagine glycans are attached at residues Asn-119 and Asn-143. N-linked (GlcNAc...) asparagine glycosylation is found at Asn-175, Asn-215, and Asn-219. The chain crosses the membrane as a helical span at residues 237 to 257 (LLISASATVGGLLLVALMCFW). The Cytoplasmic segment spans residues 258-589 (GCFLYKKLGR…PSDFYDSSSD (332 aa)). The 273-residue stretch at 304–576 (LNEEHIIGCG…VVQLLESEVM (273 aa)) folds into the Protein kinase domain. ATP is bound by residues 310-318 (IGCGGFGTV) and Lys-332. At Ser-384 the chain carries Phosphoserine. Asp-427 functions as the Proton acceptor in the catalytic mechanism. A phosphothreonine mark is found at Thr-460, Thr-461, and Thr-466. Tyr-474 is modified (phosphotyrosine).

It belongs to the protein kinase superfamily. Ser/Thr protein kinase family. Interacts with the ACC synthases ACS5 and ACS9 but not ACS2, via the kinase domain. Post-translationally, autophosphorylated. Expressed in the root meristem and elongation zone, and in hypocotyls of etiolated seedlings.

The protein localises to the cell membrane. The catalysed reaction is L-seryl-[protein] + ATP = O-phospho-L-seryl-[protein] + ADP + H(+). It catalyses the reaction L-threonyl-[protein] + ATP = O-phospho-L-threonyl-[protein] + ADP + H(+). Involved in the signaling pathway that regulates cell wall function, including cellulose biosynthesis, likely via an 1-aminocyclopropane-1-carboxylic acid (ACC)-mediated signal (a precursor of ethylene). In Arabidopsis thaliana (Mouse-ear cress), this protein is LRR receptor-like serine/threonine-protein kinase FEI 2 (FEI2).